Consider the following 699-residue polypeptide: (E2-independent) E3 ubiquitin-conjugating enzyme FATS (699 aa).

Residues 48–116 (MISSIVISQM…LGIPAPSDER (69 aa)) are required for interaction with p53/TP53. Disordered stretches follow at residues 107–134 (LGIP…GGPR), 443–473 (KPTR…ERRH), and 528–569 (KSED…PARS). Basic and acidic residues-rich tracts occupy residues 113 to 129 (SDER…EERP) and 460 to 473 (CLSR…ERRH). Residues 116 to 224 (RGPEAELPPK…GLCERRKYWV (109 aa)) are required for interaction with HDAC1. The segment covering 534-545 (TPEPSPAAPSPA) has biased composition (pro residues). The segment at 571-699 (TLQEALEVRK…LDQLLQRNAV (129 aa)) is ALMS motif.

As to quaternary structure, interacts with HDAC1; the interaction prevents binding of HDAC1 to CDKN1A/p21 and facilitates the acetylation and stabilization of CDKN1A/p21. Interacts with p53/TP53; the interaction inhibits binding of p53/TP53 and MDM2.

It is found in the cytoplasm. It localises to the cytoskeleton. The protein localises to the microtubule organizing center. The protein resides in the centrosome. Functionally, tumor suppressor that is required to sustain G2/M checkpoint after DNA damage. Acts as a p53/TP53 activator by inhibiting MDM2 binding to p53/TP53 and stimulating non-proteolytic polyubiquitination of p53/TP53. Exhibits ubiquitin ligase (E3) activity and assemble ubiquitin polymers through 'Lys-11'- (K11-), 'Lys-29'- (K29-) and 'Lys-63'- (K63)-linkages, independently of the ubiquitin-conjugating enzyme (E2). Promotes p53/TP53-dependent transcription of CDKN1A/p21, leading to robust checkpoint response. Mediates CDKN1A/p21 protein stability in a ubiquitin-independent manner. Interacts with HDAC1 and prevents binding of HDAC1 to CDKN1A/p21 and facilitates the acetylation and stabilization of CDKN1A/p21. May have a role in the assembly of primary cilia. The protein is (E2-independent) E3 ubiquitin-conjugating enzyme FATS of Homo sapiens (Human).